The following is a 169-amino-acid chain: ALK and LTK ligand 2a (169 aa).

An N-terminal signal peptide occupies residues 1–25 (MRALRAPVLVMGLVLLICTAAQSDA). Residues 45–68 (ENSADDESAQKTESAPEPKDTHHL) are disordered. Positions 52–67 (SAQKTESAPEPKDTHH) are enriched in basic and acidic residues. 2 disulfides stabilise this stretch: cysteine 130/cysteine 166 and cysteine 144/cysteine 153.

It belongs to the ALKAL family. In terms of assembly, homodimer. In terms of tissue distribution, expressed at high level in the notochord and iridophore stripes of the trunk, as well as in the eye and swim bladder.

The protein localises to the secreted. The protein resides in the cell membrane. Functionally, cytokine that acts as a physiological ligand for receptor tyrosine kinases LTK and ALK. Required for neural crest cell differentiation and iridophore development during embryonic iridophore development and adult stripe development by acting as a receptor for LTK. The polypeptide is ALK and LTK ligand 2a (Danio rerio (Zebrafish)).